Here is a 250-residue protein sequence, read N- to C-terminus: 3-deoxy-manno-octulosonate cytidylyltransferase (250 aa).

Belongs to the KdsB family.

The protein resides in the cytoplasm. It carries out the reaction 3-deoxy-alpha-D-manno-oct-2-ulosonate + CTP = CMP-3-deoxy-beta-D-manno-octulosonate + diphosphate. Its pathway is nucleotide-sugar biosynthesis; CMP-3-deoxy-D-manno-octulosonate biosynthesis; CMP-3-deoxy-D-manno-octulosonate from 3-deoxy-D-manno-octulosonate and CTP: step 1/1. The protein operates within bacterial outer membrane biogenesis; lipopolysaccharide biosynthesis. Its function is as follows. Activates KDO (a required 8-carbon sugar) for incorporation into bacterial lipopolysaccharide in Gram-negative bacteria. This Bacteroides thetaiotaomicron (strain ATCC 29148 / DSM 2079 / JCM 5827 / CCUG 10774 / NCTC 10582 / VPI-5482 / E50) protein is 3-deoxy-manno-octulosonate cytidylyltransferase.